A 487-amino-acid polypeptide reads, in one-letter code: Virulence sensor histidine kinase PhoQ (487 aa).

The Cytoplasmic segment spans residues Met1–Arg16. A helical transmembrane segment spans residues Phe17–Leu37. The Periplasmic segment spans residues Val38 to Ser193. A divalent metal cation contacts are provided by Asp151 and Asp152. The helical transmembrane segment at Trp194–Ala214 threads the bilayer. The HAMP domain occupies Trp215–Asn266. Topologically, residues Trp215 to Glu487 are cytoplasmic. In terms of domain architecture, Histidine kinase spans Asp274 to His481. At His277 the chain carries Phosphohistidine; by autocatalysis. Asn386 contacts Mg(2+). ATP contacts are provided by residues Asn386–Tyr394, Asp416–Ile421, and Arg435–Leu447. Gln443 contributes to the Mg(2+) binding site.

As to quaternary structure, homodimer.

It localises to the cell inner membrane. The enzyme catalyses ATP + protein L-histidine = ADP + protein N-phospho-L-histidine.. Member of the two-component regulatory system PhoP/PhoQ which regulates the expression of genes involved in virulence and resistance to host defense antimicrobial peptides. In low periplasmic Mg(2+), PhoQ functions as a membrane-associated protein kinase that undergoes autophosphorylation and subsequently transfers the phosphate to PhoP, which results in the expression of PhoP-activated genes (PAG) and repression of PhoP-repressed genes (PRG). In high periplasmic Mg(2+), acts as a protein phosphatase that dephosphorylates phospho-PhoP, which results in the repression of PAG and may lead to expression of some PRG. This is Virulence sensor histidine kinase PhoQ (phoQ) from Salmonella paratyphi A (strain ATCC 9150 / SARB42).